The primary structure comprises 215 residues: GTP-binding nuclear protein Ran (215 aa).

Residues 6 to 170 enclose the Small GTPase Ran-type domain; that stretch reads DIPTFKLVLV…LWLVRKLLGD (165 aa). GTP-binding positions include 17–24, 35–41, Gly67, 121–124, and 149–151; these read DGGTGKTT, EKKYVAT, NFVD, and SAK. The switch-I stretch occupies residues 36–44; it reads KKYVATLGV. A switch-II region spans residues 67 to 83; that stretch reads GQEKFGGLRDGYYIQGQ. An interaction with RANBP1 region spans residues 210-215; it reads DDDEDL.

The protein belongs to the small GTPase superfamily. Ran family. Monomer. Interacts with RANGAP1, which promotes RAN-mediated GTP hydrolysis. Interacts with KPNB1. Interaction with KPNB1 inhibits RANGAP1-mediated stimulation of GTPase activity. Interacts with RCC1 which promotes the exchange of RAN-bound GDP by GTP. Interaction with KPNB1 inhibits RCC1-mediated exchange of RAN-bound GDP by GTP. Interacts (GTP-bound form) with TNPO1; the interaction is direct. Interacts with KPNB1 and with TNPO1; both inhibit RAN GTPase activity. Interacts (via C-terminus) with RANBP1, which alleviates the inhibition of RAN GTPase activity. Interacts with RANGRF, which promotes the release of bound guanine nucleotide. RANGRF and RCC1 compete for an overlapping binding site on RAN. Identified in a complex with KPNA2 and CSE1L; interaction with RANBP1 mediates dissociation of RAN from this complex. Interaction with both RANBP1 and KPNA2 promotes dissociation of the complex between RAN and KPNB1. Identified in a complex composed of RAN, RANGAP1 and RANBP1. Identified in a complex that contains TNPO1, RAN and RANBP1. Identified in a nuclear export complex with XPO1. Interaction with RANBP1 or RANBP2 induces a conformation change in the complex formed by XPO1 and RAN that triggers the release of the nuclear export signal of cargo proteins. Component of a nuclear export receptor complex composed of KPNB1, RAN, SNUPN and XPO1. Mg(2+) is required as a cofactor.

The protein resides in the nucleus. The protein localises to the nucleus envelope. Its subcellular location is the cytoplasm. It localises to the cytosol. Its function is as follows. GTPase involved in nucleocytoplasmic transport, participating both to the import and the export from the nucleus of proteins and RNAs. Switches between a cytoplasmic GDP- and a nuclear GTP-bound state by nucleotide exchange and GTP hydrolysis. Nuclear import receptors such as importin beta bind their substrates only in the absence of GTP-bound RAN and release them upon direct interaction with GTP-bound RAN, while export receptors behave in the opposite way. Thereby, RAN controls cargo loading and release by transport receptors in the proper compartment and ensures the directionality of the transport. Interaction with RANBP1 induces a conformation change in the complex formed by XPO1 and RAN that triggers the release of the nuclear export signal of cargo proteins. RAN (GTP-bound form) triggers microtubule assembly at mitotic chromosomes and is required for normal mitotic spindle assembly and chromosome segregation. Required for normal progress through mitosis. The sequence is that of GTP-binding nuclear protein Ran (ran-1) from Onchocerca volvulus.